Reading from the N-terminus, the 147-residue chain is Large ribosomal subunit protein uL13 (147 aa).

The protein belongs to the universal ribosomal protein uL13 family. As to quaternary structure, part of the 50S ribosomal subunit.

Its function is as follows. This protein is one of the early assembly proteins of the 50S ribosomal subunit, although it is not seen to bind rRNA by itself. It is important during the early stages of 50S assembly. The chain is Large ribosomal subunit protein uL13 from Levilactobacillus brevis (strain ATCC 367 / BCRC 12310 / CIP 105137 / JCM 1170 / LMG 11437 / NCIMB 947 / NCTC 947) (Lactobacillus brevis).